The following is a 249-amino-acid chain: Major phosphate-irrepressible acid phosphatase (249 aa).

Positions Met-1–Ala-20 are cleaved as a signal peptide.

Belongs to the class A bacterial acid phosphatase family. Homotetramer.

The protein resides in the periplasm. The catalysed reaction is a phosphate monoester + H2O = an alcohol + phosphate. In Morganella morganii (Proteus morganii), this protein is Major phosphate-irrepressible acid phosphatase (phoC).